Reading from the N-terminus, the 164-residue chain is S-ribosylhomocysteine lyase (164 aa).

Fe cation contacts are provided by H54, H58, and C128.

It belongs to the LuxS family. Homodimer. Fe cation serves as cofactor.

The catalysed reaction is S-(5-deoxy-D-ribos-5-yl)-L-homocysteine = (S)-4,5-dihydroxypentane-2,3-dione + L-homocysteine. In terms of biological role, involved in the synthesis of autoinducer 2 (AI-2) which is secreted by bacteria and is used to communicate both the cell density and the metabolic potential of the environment. The regulation of gene expression in response to changes in cell density is called quorum sensing. Catalyzes the transformation of S-ribosylhomocysteine (RHC) to homocysteine (HC) and 4,5-dihydroxy-2,3-pentadione (DPD). The sequence is that of S-ribosylhomocysteine lyase from Campylobacter jejuni subsp. doylei (strain ATCC BAA-1458 / RM4099 / 269.97).